We begin with the raw amino-acid sequence, 435 residues long: Histidine--tRNA ligase (435 aa).

It belongs to the class-II aminoacyl-tRNA synthetase family.

The protein resides in the cytoplasm. It catalyses the reaction tRNA(His) + L-histidine + ATP = L-histidyl-tRNA(His) + AMP + diphosphate + H(+). This chain is Histidine--tRNA ligase (hisS), found in Aeropyrum pernix (strain ATCC 700893 / DSM 11879 / JCM 9820 / NBRC 100138 / K1).